Consider the following 144-residue polypeptide: NADH dehydrogenase [ubiquinone] 1 alpha subcomplex subunit 13 (144 aa).

Residues 30–51 (LSGYSMLALGIGTLIYGHWSMM) form a helical membrane-spanning segment.

This sequence belongs to the complex I NDUFA13 subunit family. In terms of assembly, complex I is composed of 45 different subunits. Interacts with CARD15, but not with CARD4. Interacts with STAT3, but not with STAT1, STAT2 and STAT5A. Interacts with OLFM4.

It is found in the mitochondrion inner membrane. Its subcellular location is the nucleus. In terms of biological role, accessory subunit of the mitochondrial membrane respiratory chain NADH dehydrogenase (Complex I), that is believed not to be involved in catalysis. Complex I functions in the transfer of electrons from NADH to the respiratory chain. The immediate electron acceptor for the enzyme is believed to be ubiquinone. Involved in the interferon/all-trans-retinoic acid (IFN/RA) induced cell death. This apoptotic activity is inhibited by interaction with viral IRF1. Prevents the transactivation of STAT3 target genes. May play a role in CARD15-mediated innate mucosal responses and serve to regulate intestinal epithelial cell responses to microbes. This chain is NADH dehydrogenase [ubiquinone] 1 alpha subcomplex subunit 13 (NDUFA13), found in Pongo pygmaeus (Bornean orangutan).